Reading from the N-terminus, the 1183-residue chain is Putative ATP-dependent RNA helicase PB1A10.06c (1183 aa).

Disordered stretches follow at residues 1–92 (MGRL…KKRL) and 165–315 (ETTT…RASR). Over residues 60-81 (VPKEERQKRKQELKDQLLKENE) the composition is skewed to basic and acidic residues. Composition is skewed to low complexity over residues 165–176 (ETTTTKSSTAET) and 184–196 (TRSGFGFGFSTGT). Positions 224–251 (EDPEYDSAEEDYLSTDSEEFSEDSDNSS) are enriched in acidic residues. Positions 252 to 270 (EENKDTNEPSTKDAEKTVP) are enriched in basic and acidic residues. Residues 292 to 308 (ENEDFDLETSEDDSSDD) show a composition bias toward acidic residues. One can recognise a Helicase ATP-binding domain in the interval 408-585 (MEQIFANDVV…KLLFSVPPPI (178 aa)). 421-428 (GATGSGKT) contacts ATP. The DEAH box signature appears at 522–525 (DEAH). In terms of domain architecture, Helicase C-terminal spans 611-831 (AFDKVCLIHK…SIVLQMKNMN (221 aa)). The segment covering 673 to 683 (EDLQSETEDID) has biased composition (acidic residues). The segment at 673–696 (EDLQSETEDIDQVPTSSSSSVTYD) is disordered.

It belongs to the DEAD box helicase family. DEAH subfamily.

The protein resides in the nucleus. The protein localises to the nucleolus. The catalysed reaction is ATP + H2O = ADP + phosphate + H(+). This is Putative ATP-dependent RNA helicase PB1A10.06c from Schizosaccharomyces pombe (strain 972 / ATCC 24843) (Fission yeast).